The sequence spans 144 residues: Putative pre-16S rRNA nuclease (144 aa).

Belongs to the YqgF nuclease family.

Its subcellular location is the cytoplasm. Could be a nuclease involved in processing of the 5'-end of pre-16S rRNA. This chain is Putative pre-16S rRNA nuclease, found in Picosynechococcus sp. (strain ATCC 27264 / PCC 7002 / PR-6) (Agmenellum quadruplicatum).